The sequence spans 154 residues: Egg-lysin (154 aa).

The signal sequence occupies residues 1 to 18 (MKLLVLCIFAMMATLAMS).

Homodimer. In terms of tissue distribution, sperm.

Dissolves the egg vitelline layer nonenzymatically during fertilization. It creates a hole of about 3 mu-m in diameter through which the sperm pass. In Haliotis walallensis (Flat abalone), this protein is Egg-lysin.